Reading from the N-terminus, the 404-residue chain is Argininosuccinate synthase (404 aa).

Residues 11 to 19 (AYSGGLDTS) and Ala-38 each bind ATP. Positions 91 and 96 each coordinate L-citrulline. Residue Gly-121 participates in ATP binding. Residues Thr-123, Asn-127, and Asp-128 each contribute to the L-aspartate site. An L-citrulline-binding site is contributed by Asn-127. L-citrulline is bound by residues Arg-131, Ser-182, Ser-191, Glu-267, and Tyr-279.

This sequence belongs to the argininosuccinate synthase family. Type 1 subfamily. As to quaternary structure, homotetramer.

The protein resides in the cytoplasm. The enzyme catalyses L-citrulline + L-aspartate + ATP = 2-(N(omega)-L-arginino)succinate + AMP + diphosphate + H(+). It functions in the pathway amino-acid biosynthesis; L-arginine biosynthesis; L-arginine from L-ornithine and carbamoyl phosphate: step 2/3. This is Argininosuccinate synthase from Paramagnetospirillum magneticum (strain ATCC 700264 / AMB-1) (Magnetospirillum magneticum).